A 526-amino-acid chain; its full sequence is Acid-sensing ion channel 1 (526 aa).

Residues 1-49 (MELKTEEEEVGGVQPVSIQAFASSSTLHGLAHIFSYERLSLKRALWALC) lie on the Cytoplasmic side of the membrane. A helical transmembrane segment spans residues 50 to 66 (FLGSLAVLLCVCTERVQ). The Extracellular portion of the chain corresponds to 67–425 (YYFCYHHVTK…ETIEQKKAYE (359 aa)). 7 disulfides stabilise this stretch: Cys-93–Cys-194, Cys-172–Cys-179, Cys-290–Cys-365, Cys-308–Cys-361, Cys-312–Cys-359, Cys-321–Cys-343, and Cys-323–Cys-335. Asn-366 and Asn-393 each carry an N-linked (GlcNAc...) asparagine glycan. The discontinuously helical transmembrane segment at 426-456 (IAGLLGDIGGQMGLFIGASILTVLELFDYAY) threads the bilayer. A GAS motif; ion selectivity filter motif is present at residues 442–444 (GAS). Topologically, residues 457-526 (EVIKHRLCRR…ARGTFEDFTC (70 aa)) are cytoplasmic. Ser-477 and Ser-497 each carry phosphoserine.

This sequence belongs to the amiloride-sensitive sodium channel (TC 1.A.6) family. ASIC1 subfamily. In terms of assembly, homotrimer. Heterotrimer; with other ASIC proteins producing channel with different properties. Interacts with PICK1; regulates ASIC1 clustering in membranes. Interacts with STOM; alters heterotrimeric ASIC channels activity. In terms of processing, pH-gating could be regulated by serine proteases. Post-translationally, phosphorylation by PKA regulates interaction with PICK1 and subcellular localization. Phosphorylation by PKC may regulate the channel. Expressed in dorsal root ganglia and sciatic nerve (at protein level). Widely distributed throughout the brain. Expressed in olfactory bulb, neo and allocortical regions, dentate granule cells, pyramidal cells of CA1-CA3 subfields of the hippocampal formation, habenula, basolateral amygdaloid nuclei, and in the Purkinje and granule cells of the cerebellum. Diffusely detected over most other regions of the basal ganglia, including thalamic nuclei, substantia nigra, striatum and globus pallidus, hypothalamus, midbrain, pons, medulla and choroid plexus. In terms of tissue distribution, expressed only in dorsal root ganglion (DRG). As to expression, expressed exclusively in trigeminal ganglion and dorsal root ganglion.

The protein localises to the cell membrane. The protein resides in the postsynaptic cell membrane. It localises to the cell projection. Its subcellular location is the dendrite. The enzyme catalyses Na(+)(in) = Na(+)(out). It catalyses the reaction Li(+)(in) = Li(+)(out). It carries out the reaction K(+)(in) = K(+)(out). The catalysed reaction is Ca(2+)(in) = Ca(2+)(out). The enzyme catalyses H(+)(in) = H(+)(out). Inhibited by the diuretic drug amiloride. External calcium is required to potentiate proton activation of ASIC1 at physiological concentrations, but at higher, non-physiological concentrations, it inhibits activation. Also potentiated by other multivalent cations like Mg(2+), Ba(2+). Activated by FMRFamide-related neuropeptides. Inhibited by anti-inflammatory drugs like salicylic acid. The spider venom psalmotoxin-1 specifically inhibits the ASIC1 homotrimer. The snake venom mambalgin-1, mambalgin-2 and mambalgin-3 inhibit the homotrimer of Asic1a (ASIC1 isoform 1). The snake venom mambalgin-1 and mambalgin-2 inhibit heterotrimers of Asic1a-Asic1b (ASIC1 isoform 1-ASIC1 isoform 3). Heterotrimer of Asic1a-Asic2a is inhibited by the snake venom mambalgin-1, mambalgin-2 and mambalgin-3. Heterotrimer of Asic1a-Asic2b is inhibited by the snake venom mambalgin-1 and mambalgin-2. The spider venom Pi-theraphotoxin-Hm3a inhibits the homotrimer of Asic1a (ASIC1 isoform 1). The spider venom Pi-theraphotoxin-Hm3a inhibits heterotrimers of Asic1a-Asic1b (ASIC1 isoform 1-ASIC1 isoform 3). The spider venom Pi-hexatoxin-Hi1a inhibits the ASIC1 homotrimer. Its activity is regulated as follows. Not inhibited by extracellular calcium. Its function is as follows. Forms voltage-independent, pH-gated trimeric sodium channels that act as postsynaptic excitatory receptors in the nervous system, playing a crucial role in regulating synaptic plasticity, learning, and memory. Upon extracellular pH drop this channel elicits transient, fast activating, and completely desensitizing inward currents. Displays high selectivity for sodium ions but can also permit the permeation of other cations. Regulates more or less directly intracellular calcium concentration and CaMKII phosphorylation, and thereby the density of dendritic spines. Modulates neuronal activity in the circuits underlying innate fear. Functionally, permeable to other cations including calcium, lithium and potassium. PH activation and steady-state inactivation are shifted to more acidic values. Forms channels that are not permeable to calcium as it discrimates stronger between monovalent cations. In terms of biological role, has no pH-gated sodium channel activity per se but can associate with other ASICs and regulate their pH-sensitivity. The polypeptide is Acid-sensing ion channel 1 (Rattus norvegicus (Rat)).